The primary structure comprises 291 residues: T-cell leukemia homeobox protein 3 (291 aa).

Residues 1 to 51 form a disordered region; that stretch reads MEAPASAQTPHPHEPISFGIDQILNSPDQDSAPAPRGPDGASYLGGPPGGR. Positions 166–225 form a DNA-binding region, homeobox; that stretch reads RKKPRTSFSRVQICELEKRFHRQKYLASAERAALAKSLKMTDAQVKTWFQNRRTKWRRQT.

It is found in the nucleus. This Mus musculus (Mouse) protein is T-cell leukemia homeobox protein 3 (Tlx3).